Consider the following 238-residue polypeptide: Probable 2-phosphosulfolactate phosphatase (238 aa).

Belongs to the ComB family. Mg(2+) serves as cofactor.

It catalyses the reaction (2R)-O-phospho-3-sulfolactate + H2O = (2R)-3-sulfolactate + phosphate. The sequence is that of Probable 2-phosphosulfolactate phosphatase from Clostridium beijerinckii (strain ATCC 51743 / NCIMB 8052) (Clostridium acetobutylicum).